A 575-amino-acid chain; its full sequence is Dihydroxy-acid dehydratase (575 aa).

Positions 1–25 (MPTTDSARAADIKQPDIKPRSRDVT) are disordered. Positions 8–25 (RAADIKQPDIKPRSRDVT) are enriched in basic and acidic residues. Cys-64 contacts [2Fe-2S] cluster. Position 96 (Asp-96) interacts with Mg(2+). [2Fe-2S] cluster is bound at residue Cys-137. Mg(2+) is bound by residues Asp-138 and Lys-139. Lys-139 is subject to N6-carboxylysine. Cys-214 contributes to the [2Fe-2S] cluster binding site. Glu-465 is a Mg(2+) binding site. Ser-491 (proton acceptor) is an active-site residue.

This sequence belongs to the IlvD/Edd family. In terms of assembly, homodimer. [2Fe-2S] cluster is required as a cofactor. Mg(2+) serves as cofactor.

It catalyses the reaction (2R)-2,3-dihydroxy-3-methylbutanoate = 3-methyl-2-oxobutanoate + H2O. The enzyme catalyses (2R,3R)-2,3-dihydroxy-3-methylpentanoate = (S)-3-methyl-2-oxopentanoate + H2O. The protein operates within amino-acid biosynthesis; L-isoleucine biosynthesis; L-isoleucine from 2-oxobutanoate: step 3/4. It functions in the pathway amino-acid biosynthesis; L-valine biosynthesis; L-valine from pyruvate: step 3/4. Its function is as follows. Functions in the biosynthesis of branched-chain amino acids. Catalyzes the dehydration of (2R,3R)-2,3-dihydroxy-3-methylpentanoate (2,3-dihydroxy-3-methylvalerate) into 2-oxo-3-methylpentanoate (2-oxo-3-methylvalerate) and of (2R)-2,3-dihydroxy-3-methylbutanoate (2,3-dihydroxyisovalerate) into 2-oxo-3-methylbutanoate (2-oxoisovalerate), the penultimate precursor to L-isoleucine and L-valine, respectively. The sequence is that of Dihydroxy-acid dehydratase from Mycolicibacterium paratuberculosis (strain ATCC BAA-968 / K-10) (Mycobacterium paratuberculosis).